Consider the following 374-residue polypeptide: RNA polymerase sigma factor SigA (374 aa).

The sigma-70 factor domain-2 stretch occupies residues Leu-141–Thr-211. Residues Asp-165–Gln-168 carry the Interaction with polymerase core subunit RpoC motif. Residues Glu-220–His-296 form a sigma-70 factor domain-3 region. The sigma-70 factor domain-4 stretch occupies residues Val-309–His-362. Positions Leu-335–Ala-354 form a DNA-binding region, H-T-H motif.

It belongs to the sigma-70 factor family. RpoD/SigA subfamily. As to quaternary structure, interacts transiently with the RNA polymerase catalytic core.

The protein resides in the cytoplasm. In terms of biological role, sigma factors are initiation factors that promote the attachment of RNA polymerase to specific initiation sites and are then released. This sigma factor is the primary sigma factor during exponential growth. This is RNA polymerase sigma factor SigA from Listeria innocua serovar 6a (strain ATCC BAA-680 / CLIP 11262).